Consider the following 678-residue polypeptide: ABC transporter G family member 13 (678 aa).

The ABC transporter domain maps to valine 10 to serine 254. Glycine 48–serine 55 is an ATP binding site. Residues lysine 355–methionine 567 enclose the ABC transmembrane type-2 domain. 6 helical membrane passes run tyrosine 374–phenylalanine 394, cysteine 409–isoleucine 429, valine 446–leucine 466, leucine 490–valine 510, phenylalanine 513–phenylalanine 533, and leucine 602–leucine 622. Position 658 is a phosphoserine (serine 658).

Belongs to the ABC transporter superfamily. ABCG family. Eye pigment precursor importer (TC 3.A.1.204) subfamily.

It is found in the membrane. The chain is ABC transporter G family member 13 (ABCG13) from Arabidopsis thaliana (Mouse-ear cress).